We begin with the raw amino-acid sequence, 166 residues long: Bile acid 7alpha-dehydratase (166 aa).

As to quaternary structure, homodimer.

It carries out the reaction 7alpha,12alpha-dihydroxy-3-oxochol-4-en-24-oyl-CoA = 12alpha-hydroxy-3-oxochola-4,6-dien-24-oyl-CoA + H2O. The catalysed reaction is 7alpha-hydroxy-3-oxochol-4-en-24-oyl-CoA = 3-oxochol-4,6-dien-24-oyl-CoA + H2O. The enzyme catalyses 7alpha,12alpha-dihydroxy-3-oxochol-4-en-24-oate = 12alpha-hydroxy-3-oxochola-4,6-dien-24-oate + H2O. It catalyses the reaction 7alpha-hydroxy-3-oxochol-4-en-24-oate = 3-oxochola-4,6-dien-24-oate + H2O. It participates in lipid metabolism; bile acid biosynthesis. In terms of biological role, functions in the bile acid 7alpha-dehydroxylation pathway, which forms secondary bile acids via the 7alpha-dehydroxylation of primary bile acids, and is carried out by intestinal anaerobic bacteria. Catalyzes the dehydration step in this pathway, yielding a 3-oxo-Delta(4,6)-bile acid-CoA intermediate. In vitro, can act on the free bile acids (non CoA-conjugated) 7-alpha,12-alpha-dihydroxy-3-oxochol-4-enoate and 7-alpha-hydroxy-3-oxochol-4-enoate, but not on 7-alpha,12-alpha-dihydroxy-3-oxo-5-beta-cholanate, 3-alpha,7-alpha,12-alpha-trihydroxy-5-beta-cholanate or 7-beta-hydroxy-3-oxochol-4-enoate. This is Bile acid 7alpha-dehydratase from Clostridium scindens (strain JCM 10418 / VPI 12708).